The primary structure comprises 81 residues: ATP synthase subunit c (81 aa).

The next 2 helical transmembrane spans lie at 7 to 27 (FVALAAGLIIGLGAIGACIGI) and 53 to 73 (FLLAGLIDAAFLIGVGIAMMF).

This sequence belongs to the ATPase C chain family. In terms of assembly, F-type ATPases have 2 components, F(1) - the catalytic core - and F(0) - the membrane proton channel. F(1) has five subunits: alpha(3), beta(3), gamma(1), delta(1), epsilon(1). F(0) has three main subunits: a(1), b(2) and c(10-14). The alpha and beta chains form an alternating ring which encloses part of the gamma chain. F(1) is attached to F(0) by a central stalk formed by the gamma and epsilon chains, while a peripheral stalk is formed by the delta and b chains.

The protein resides in the cell inner membrane. In terms of biological role, f(1)F(0) ATP synthase produces ATP from ADP in the presence of a proton or sodium gradient. F-type ATPases consist of two structural domains, F(1) containing the extramembraneous catalytic core and F(0) containing the membrane proton channel, linked together by a central stalk and a peripheral stalk. During catalysis, ATP synthesis in the catalytic domain of F(1) is coupled via a rotary mechanism of the central stalk subunits to proton translocation. Key component of the F(0) channel; it plays a direct role in translocation across the membrane. A homomeric c-ring of between 10-14 subunits forms the central stalk rotor element with the F(1) delta and epsilon subunits. The sequence is that of ATP synthase subunit c from Azoarcus sp. (strain BH72).